Consider the following 163-residue polypeptide: ATP synthase subunit b (163 aa).

The helical transmembrane segment at 9–29 threads the bilayer; the sequence is GLLIAQLINVVFVVWLLTTFL.

This sequence belongs to the ATPase B chain family. In terms of assembly, F-type ATPases have 2 components, F(1) - the catalytic core - and F(0) - the membrane proton channel. F(1) has five subunits: alpha(3), beta(3), gamma(1), delta(1), epsilon(1). F(0) has four main subunits: a(1), b(2) and c(10-14). The alpha and beta chains form an alternating ring which encloses part of the gamma chain. F(1) is attached to F(0) by a central stalk formed by the gamma and epsilon chains, while a peripheral stalk is formed by the delta and b chains.

It localises to the cell membrane. F(1)F(0) ATP synthase produces ATP from ADP in the presence of a proton or sodium gradient. F-type ATPases consist of two structural domains, F(1) containing the extramembraneous catalytic core and F(0) containing the membrane proton channel, linked together by a central stalk and a peripheral stalk. During catalysis, ATP synthesis in the catalytic domain of F(1) is coupled via a rotary mechanism of the central stalk subunits to proton translocation. Functionally, component of the F(0) channel, it forms part of the peripheral stalk, linking F(1) to F(0). The chain is ATP synthase subunit b from Roseiflexus castenholzii (strain DSM 13941 / HLO8).